We begin with the raw amino-acid sequence, 416 residues long: CinA-like protein (416 aa).

The protein belongs to the CinA family.

In Trichormus variabilis (strain ATCC 29413 / PCC 7937) (Anabaena variabilis), this protein is CinA-like protein.